Reading from the N-terminus, the 475-residue chain is Dihydrolipoyl dehydrogenase (475 aa).

FAD-binding positions include 37 to 46 (EQYYSLGGVC), lysine 55, and alanine 118. The cysteines at positions 46 and 51 are disulfide-linked. NAD(+) is bound by residues 183-187 (GGGII), aspartate 206, valine 239, and 272-275 (AIGR). FAD-binding residues include aspartate 315 and alanine 323. Histidine 447 acts as the Proton acceptor in catalysis.

This sequence belongs to the class-I pyridine nucleotide-disulfide oxidoreductase family. Homodimer. It depends on FAD as a cofactor.

It localises to the cytoplasm. It carries out the reaction N(6)-[(R)-dihydrolipoyl]-L-lysyl-[protein] + NAD(+) = N(6)-[(R)-lipoyl]-L-lysyl-[protein] + NADH + H(+). In terms of biological role, lipoamide dehydrogenase is a component of the alpha-ketoacid dehydrogenase complexes. The sequence is that of Dihydrolipoyl dehydrogenase (lpdA) from Buchnera aphidicola subsp. Baizongia pistaciae (strain Bp).